The chain runs to 197 residues: MGVTRIGLLGGSFDPVHVAHIALADTARQFLGLDQVQLIPAANPWQRQPLKASAPHRLRMLELAIAGHPALAINPVEIERGGATYTADTVRALPGGPQYFWLLGTDQLQNFCTWRDWQDIAARIELAVATRPGASIAPPAELAAWLAAHRRQLHELPFAPMAVSASDIRQRLAAGAATDGLLPEPVAAYIATHHLYR.

It belongs to the NadD family.

The enzyme catalyses nicotinate beta-D-ribonucleotide + ATP + H(+) = deamido-NAD(+) + diphosphate. The protein operates within cofactor biosynthesis; NAD(+) biosynthesis; deamido-NAD(+) from nicotinate D-ribonucleotide: step 1/1. Catalyzes the reversible adenylation of nicotinate mononucleotide (NaMN) to nicotinic acid adenine dinucleotide (NaAD). In Bordetella pertussis (strain Tohama I / ATCC BAA-589 / NCTC 13251), this protein is Probable nicotinate-nucleotide adenylyltransferase.